We begin with the raw amino-acid sequence, 151 residues long: uncharacterized protein (151 aa).

Positions 1 to 24 are cleaved as a signal peptide; that stretch reads MYYSIIIACLVLLLCLVIYVGHRA.

It belongs to the asfivirus EP152R family.

It is found in the virion. This is an uncharacterized protein from Ornithodoros (relapsing fever ticks).